Reading from the N-terminus, the 160-residue chain is Cytochrome b6-f complex subunit 4 (160 aa).

3 helical membrane-spanning segments follow: residues Leu-36–Val-56, Leu-95–Glu-115, and Thr-131–Ile-151.

The protein belongs to the cytochrome b family. PetD subfamily. As to quaternary structure, the 4 large subunits of the cytochrome b6-f complex are cytochrome b6, subunit IV (17 kDa polypeptide, petD), cytochrome f and the Rieske protein, while the 4 small subunits are petG, petL, petM and petN. The complex functions as a dimer.

It is found in the plastid. The protein resides in the chloroplast thylakoid membrane. In terms of biological role, component of the cytochrome b6-f complex, which mediates electron transfer between photosystem II (PSII) and photosystem I (PSI), cyclic electron flow around PSI, and state transitions. The chain is Cytochrome b6-f complex subunit 4 from Pisum sativum (Garden pea).